Reading from the N-terminus, the 187-residue chain is UPF0301 protein PBPRA3139 (187 aa).

This sequence belongs to the UPF0301 (AlgH) family.

The chain is UPF0301 protein PBPRA3139 from Photobacterium profundum (strain SS9).